Consider the following 259-residue polypeptide: Deoxyribose-phosphate aldolase (259 aa).

Aspartate 102 acts as the Proton donor/acceptor in catalysis. Lysine 167 functions as the Schiff-base intermediate with acetaldehyde in the catalytic mechanism. Catalysis depends on lysine 201, which acts as the Proton donor/acceptor.

This sequence belongs to the DeoC/FbaB aldolase family. DeoC type 2 subfamily.

The protein resides in the cytoplasm. It catalyses the reaction 2-deoxy-D-ribose 5-phosphate = D-glyceraldehyde 3-phosphate + acetaldehyde. Its pathway is carbohydrate degradation; 2-deoxy-D-ribose 1-phosphate degradation; D-glyceraldehyde 3-phosphate and acetaldehyde from 2-deoxy-alpha-D-ribose 1-phosphate: step 2/2. Functionally, catalyzes a reversible aldol reaction between acetaldehyde and D-glyceraldehyde 3-phosphate to generate 2-deoxy-D-ribose 5-phosphate. The polypeptide is Deoxyribose-phosphate aldolase (Shigella boydii serotype 4 (strain Sb227)).